The chain runs to 416 residues: Serine hydroxymethyltransferase (416 aa).

(6S)-5,6,7,8-tetrahydrofolate-binding positions include Leu121 and Gly125–Leu127. Lys229 carries the post-translational modification N6-(pyridoxal phosphate)lysine.

The protein belongs to the SHMT family. As to quaternary structure, homodimer. Requires pyridoxal 5'-phosphate as cofactor.

The protein resides in the cytoplasm. It catalyses the reaction (6R)-5,10-methylene-5,6,7,8-tetrahydrofolate + glycine + H2O = (6S)-5,6,7,8-tetrahydrofolate + L-serine. Its pathway is one-carbon metabolism; tetrahydrofolate interconversion. It participates in amino-acid biosynthesis; glycine biosynthesis; glycine from L-serine: step 1/1. Its function is as follows. Catalyzes the reversible interconversion of serine and glycine with tetrahydrofolate (THF) serving as the one-carbon carrier. This reaction serves as the major source of one-carbon groups required for the biosynthesis of purines, thymidylate, methionine, and other important biomolecules. Also exhibits THF-independent aldolase activity toward beta-hydroxyamino acids, producing glycine and aldehydes, via a retro-aldol mechanism. This is Serine hydroxymethyltransferase from Neisseria meningitidis serogroup C / serotype 2a (strain ATCC 700532 / DSM 15464 / FAM18).